A 194-amino-acid polypeptide reads, in one-letter code: Endo-1,4-beta-xylanase (194 aa).

G1 carries the post-translational modification N-acetylglycine. Positions 1-191 constitute a GH11 domain; that stretch reads GTTPNSEGWH…SSGYARITVA (191 aa). The Nucleophile role is filled by E86. C110 and C154 are disulfide-bonded. The active-site Proton donor is the E178.

It belongs to the glycosyl hydrolase 11 (cellulase G) family.

The enzyme catalyses Endohydrolysis of (1-&gt;4)-beta-D-xylosidic linkages in xylans.. The protein operates within glycan degradation; xylan degradation. This chain is Endo-1,4-beta-xylanase, found in Byssochlamys spectabilis (Paecilomyces variotii).